A 147-amino-acid chain; its full sequence is Transcriptional regulator MraZ (147 aa).

2 SpoVT-AbrB domains span residues 6 to 48 and 77 to 120; these read NFER…NSEE and TVEV…SKAK.

It belongs to the MraZ family. As to quaternary structure, forms oligomers.

The protein resides in the cytoplasm. The protein localises to the nucleoid. This chain is Transcriptional regulator MraZ, found in Mycoplasmopsis pulmonis (strain UAB CTIP) (Mycoplasma pulmonis).